The primary structure comprises 197 residues: Protein GrpE (197 aa).

The span at 1–12 shows a compositional bias: basic and acidic residues; that stretch reads MTDSDGKTDKSG. The tract at residues 1–35 is disordered; sequence MTDSDGKTDKSGEPAAEVEPVVSKPYVMPDDPEDD.

It belongs to the GrpE family. As to quaternary structure, homodimer.

It is found in the cytoplasm. Functionally, participates actively in the response to hyperosmotic and heat shock by preventing the aggregation of stress-denatured proteins, in association with DnaK and GrpE. It is the nucleotide exchange factor for DnaK and may function as a thermosensor. Unfolded proteins bind initially to DnaJ; upon interaction with the DnaJ-bound protein, DnaK hydrolyzes its bound ATP, resulting in the formation of a stable complex. GrpE releases ADP from DnaK; ATP binding to DnaK triggers the release of the substrate protein, thus completing the reaction cycle. Several rounds of ATP-dependent interactions between DnaJ, DnaK and GrpE are required for fully efficient folding. The protein is Protein GrpE of Nitrobacter winogradskyi (strain ATCC 25391 / DSM 10237 / CIP 104748 / NCIMB 11846 / Nb-255).